We begin with the raw amino-acid sequence, 211 residues long: Probable nicotinate-nucleotide adenylyltransferase (211 aa).

This sequence belongs to the NadD family.

The enzyme catalyses nicotinate beta-D-ribonucleotide + ATP + H(+) = deamido-NAD(+) + diphosphate. It functions in the pathway cofactor biosynthesis; NAD(+) biosynthesis; deamido-NAD(+) from nicotinate D-ribonucleotide: step 1/1. Its function is as follows. Catalyzes the reversible adenylation of nicotinate mononucleotide (NaMN) to nicotinic acid adenine dinucleotide (NaAD). In Gemmatimonas aurantiaca (strain DSM 14586 / JCM 11422 / NBRC 100505 / T-27), this protein is Probable nicotinate-nucleotide adenylyltransferase.